The chain runs to 276 residues: Bis(5'-nucleosyl)-tetraphosphatase, symmetrical (276 aa).

Belongs to the Ap4A hydrolase family.

It catalyses the reaction P(1),P(4)-bis(5'-adenosyl) tetraphosphate + H2O = 2 ADP + 2 H(+). Hydrolyzes diadenosine 5',5'''-P1,P4-tetraphosphate to yield ADP. The sequence is that of Bis(5'-nucleosyl)-tetraphosphatase, symmetrical from Legionella pneumophila (strain Corby).